The chain runs to 400 residues: Subtilisin-like protease CPC735_047380 (400 aa).

The first 19 residues, 1 to 19, serve as a signal peptide directing secretion; the sequence is MARINVVVSFLAALAVVQA. Residues 20-118 constitute a propeptide that is removed on maturation; the sequence is AQLLNLDGQK…IEPQRTFRAF (99 aa). Residues 35–116 enclose the Inhibitor I9 domain; sequence SYVVVMNDGL…NYIEPQRTFR (82 aa). Residues 128-400 form the Peptidase S8 domain; sequence SWGLGRISHT…DKLLYNGSGQ (273 aa). N-linked (GlcNAc...) asparagine glycosylation occurs at Asn153. Catalysis depends on charge relay system residues Asp160 and His191. Residues Asn244 and Asn252 are each glycosylated (N-linked (GlcNAc...) asparagine). Ser346 (charge relay system) is an active-site residue. Residue Asn396 is glycosylated (N-linked (GlcNAc...) asparagine).

Belongs to the peptidase S8 family.

The protein localises to the secreted. Its function is as follows. Secreted subtilisin-like serine protease with keratinolytic activity that contributes to pathogenicity. The polypeptide is Subtilisin-like protease CPC735_047380 (Coccidioides posadasii (strain C735) (Valley fever fungus)).